The following is a 163-amino-acid chain: NADH-quinone oxidoreductase subunit B (163 aa).

[4Fe-4S] cluster contacts are provided by C32, C33, C98, and C127.

This sequence belongs to the complex I 20 kDa subunit family. In terms of assembly, NDH-1 is composed of 14 different subunits. Subunits NuoB, C, D, E, F, and G constitute the peripheral sector of the complex. The cofactor is [4Fe-4S] cluster.

It is found in the cell inner membrane. It carries out the reaction a quinone + NADH + 5 H(+)(in) = a quinol + NAD(+) + 4 H(+)(out). Functionally, NDH-1 shuttles electrons from NADH, via FMN and iron-sulfur (Fe-S) centers, to quinones in the respiratory chain. Couples the redox reaction to proton translocation (for every two electrons transferred, four hydrogen ions are translocated across the cytoplasmic membrane), and thus conserves the redox energy in a proton gradient. The polypeptide is NADH-quinone oxidoreductase subunit B (Pelobacter propionicus (strain DSM 2379 / NBRC 103807 / OttBd1)).